Here is a 116-residue protein sequence, read N- to C-terminus: U16-barytoxin-Tl1f (116 aa).

Residues 1–20 (MKTIIVFLSLLVLATKFGDA) form the signal peptide. A propeptide spanning residues 21-74 (NEGVNQEQMKEVIQNEFREDFLNEMAAMSLLQQLEAIESTLLEKEADRNSRQKR) is cleaved from the precursor. Disulfide bonds link Cys-75/Cys-90, Cys-82/Cys-95, and Cys-89/Cys-110. A glycan (N-linked (GlcNAc...) asparagine) is linked at Asn-85.

This sequence belongs to the neurotoxin 14 (magi-1) family. 06 (ICK-Trit) subfamily. As to expression, expressed by the venom gland.

The protein localises to the secreted. Its function is as follows. Ion channel inhibitor. The protein is U16-barytoxin-Tl1f of Trittame loki (Brush-footed trapdoor spider).